We begin with the raw amino-acid sequence, 229 residues long: Large ribosomal subunit protein uL1 (229 aa).

This sequence belongs to the universal ribosomal protein uL1 family. In terms of assembly, part of the 50S ribosomal subunit.

Binds directly to 23S rRNA. The L1 stalk is quite mobile in the ribosome, and is involved in E site tRNA release. Functionally, protein L1 is also a translational repressor protein, it controls the translation of the L11 operon by binding to its mRNA. The protein is Large ribosomal subunit protein uL1 of Lactococcus lactis subsp. lactis (strain IL1403) (Streptococcus lactis).